We begin with the raw amino-acid sequence, 295 residues long: Cyclic dipyrimidine nucleotide synthase CdnE (295 aa).

Positions 1 to 28 (MAKYTEDQLTSWTKPPSDSEQTKLENSE) are disordered. Over residues 7–19 (DQLTSWTKPPSDS) the composition is skewed to polar residues. UTP-binding residues include glutamine 51 and serine 53. Mg(2+) is bound at residue aspartate 67. Residues lysine 123, asparagine 169, arginine 197, phenylalanine 217, and lysine 276 each contribute to the UTP site. A Pyrimidine specificity motif (R/Q)xW in donor pocket motif is present at residues 275-277 (RKW).

It belongs to the CD-NTase family. E02 subfamily. In terms of assembly, monomer. Mg(2+) is required as a cofactor.

The catalysed reaction is 2 UTP = c-di-UMP + 2 diphosphate. It carries out the reaction UTP + CTP = cyclic CMP-UMP + 2 diphosphate. Cyclic nucleotide synthase (second messenger synthase) of a CBASS antivirus system. CBASS (cyclic oligonucleotide-based antiphage signaling system) provides immunity against bacteriophage. The CD-NTase protein synthesizes cyclic nucleotides in response to infection; these serve as specific second messenger signals. The signals activate a diverse range of effectors, leading to bacterial cell death and thus abortive phage infection. A type I-B(UU) CBASS system. In Cecembia lonarensis (strain CCUG 58316 / KCTC 22772 / LW9), this protein is Cyclic dipyrimidine nucleotide synthase CdnE.